A 227-amino-acid chain; its full sequence is ATP phosphoribosyltransferase (227 aa).

It belongs to the ATP phosphoribosyltransferase family. Short subfamily. In terms of assembly, heteromultimer composed of HisG and HisZ subunits.

It is found in the cytoplasm. It catalyses the reaction 1-(5-phospho-beta-D-ribosyl)-ATP + diphosphate = 5-phospho-alpha-D-ribose 1-diphosphate + ATP. The protein operates within amino-acid biosynthesis; L-histidine biosynthesis; L-histidine from 5-phospho-alpha-D-ribose 1-diphosphate: step 1/9. Catalyzes the condensation of ATP and 5-phosphoribose 1-diphosphate to form N'-(5'-phosphoribosyl)-ATP (PR-ATP). Has a crucial role in the pathway because the rate of histidine biosynthesis seems to be controlled primarily by regulation of HisG enzymatic activity. The chain is ATP phosphoribosyltransferase from Nitrosospira multiformis (strain ATCC 25196 / NCIMB 11849 / C 71).